A 186-amino-acid chain; its full sequence is Peptidyl-tRNA hydrolase (186 aa).

Residue tyrosine 14 coordinates tRNA. Histidine 19 serves as the catalytic Proton acceptor. TRNA is bound by residues phenylalanine 64, asparagine 66, and asparagine 112.

It belongs to the PTH family. In terms of assembly, monomer.

The protein resides in the cytoplasm. The enzyme catalyses an N-acyl-L-alpha-aminoacyl-tRNA + H2O = an N-acyl-L-amino acid + a tRNA + H(+). Its function is as follows. Hydrolyzes ribosome-free peptidyl-tRNAs (with 1 or more amino acids incorporated), which drop off the ribosome during protein synthesis, or as a result of ribosome stalling. In terms of biological role, catalyzes the release of premature peptidyl moieties from peptidyl-tRNA molecules trapped in stalled 50S ribosomal subunits, and thus maintains levels of free tRNAs and 50S ribosomes. This Anaplasma marginale (strain St. Maries) protein is Peptidyl-tRNA hydrolase.